The following is a 200-amino-acid chain: Proteasome subunit beta 2 (200 aa).

A propeptide spans 1 to 7 (METKKTG) (removed in mature form; by autocatalysis). Residue Thr-8 is the Nucleophile of the active site.

This sequence belongs to the peptidase T1B family. In terms of assembly, the 20S proteasome core is composed of 14 alpha and 14 beta subunits that assemble into four stacked heptameric rings, resulting in a barrel-shaped structure. The two inner rings, each composed of seven catalytic beta subunits, are sandwiched by two outer rings, each composed of seven alpha subunits. The catalytic chamber with the active sites is on the inside of the barrel. Has a gated structure, the ends of the cylinder being occluded by the N-termini of the alpha-subunits. Is capped at one or both ends by the proteasome regulatory ATPase, PAN.

The protein localises to the cytoplasm. It catalyses the reaction Cleavage of peptide bonds with very broad specificity.. Its activity is regulated as follows. The formation of the proteasomal ATPase PAN-20S proteasome complex, via the docking of the C-termini of PAN into the intersubunit pockets in the alpha-rings, triggers opening of the gate for substrate entry. Interconversion between the open-gate and close-gate conformations leads to a dynamic regulation of the 20S proteasome proteolysis activity. Functionally, component of the proteasome core, a large protease complex with broad specificity involved in protein degradation. This chain is Proteasome subunit beta 2, found in Thermococcus onnurineus (strain NA1).